The sequence spans 24 residues: Brevinin-1 (24 aa).

A disulfide bond links Cys-18 and Cys-24.

Belongs to the frog skin active peptide (FSAP) family. Brevinin subfamily. Expressed by the skin glands.

The protein resides in the secreted. Its function is as follows. Shows antibacterial activity against representative Gram-negative and Gram-positive bacterial species, and a very high hemolytic activity. This chain is Brevinin-1, found in Pelophylax porosus brevipodus (Nagoya Daruma pond frog).